A 765-amino-acid polypeptide reads, in one-letter code: uncharacterized protein (765 aa).

Disordered regions lie at residues Asn-9 to Val-61, Gln-128 to Ser-164, Thr-265 to Thr-289, Trp-301 to Gln-373, Ile-409 to Asn-526, Pro-540 to Glu-560, and Asn-668 to Ile-765. Low complexity-rich tracts occupy residues Ser-40–Val-61 and Ser-143–Asn-161. Composition is skewed to low complexity over residues Trp-301–Lys-311, Tyr-325–Ser-344, Ile-353–Gln-373, Ser-414–Thr-428, Asn-438–Asn-485, Asp-495–Asp-504, and Ser-513–Asn-526. The segment covering Asn-668–Asn-745 has biased composition (low complexity).

This is an uncharacterized protein from Dictyostelium discoideum (Social amoeba).